A 360-amino-acid polypeptide reads, in one-letter code: Hydroxyproline O-arabinosyltransferase RDN2 (360 aa).

Residues 13–33 form a helical; Signal-anchor membrane-spanning segment; the sequence is VLGSSFATYNLVTMIIHYGSA.

It localises to the golgi apparatus membrane. It catalyses the reaction trans-4-hydroxy-L-prolyl-[protein] + UDP-beta-L-arabinofuranose = O-(beta-L-arabinofuranosyl)-trans-4-hydroxy-L-prolyl-[protein] + UDP + H(+). Functionally, glycosyltransferase involved in the O-arabinosylation of several proteins including extensins and small signaling peptides. Catalyzes the transfer of the initial L-arabinose to the hydroxyl group of Hyp residues. Probably involved in the arabinosylation of CLAVATA3/ESR-related (CLE) signaling peptides that move from root to shoot, to interact with SUNN receptor kinase signaling that regulates nodulation. Involved in long distance nodulation signaling events. Involved in the autoregulation of nodulation (AON), a long distance systemic signaling from root to shoot and back again, which allows legumes to limit the number of root nodules formed based on available nitrogen and previous rhizobial colonization. Functions in the root, upstream of the shoot receptor kinase SUNN and via CLE peptide, to control AON. The sequence is that of Hydroxyproline O-arabinosyltransferase RDN2 from Medicago truncatula (Barrel medic).